Consider the following 792-residue polypeptide: MAMNENAYPTTFPSFERENHRDALRQPFDPAFRRTWSNGVALRQLVDFARPTVANHTMSYALIEYCLSRLPMQHLERLGQLKIPVELHAAPFQYLQKHHRACGFDWVERFVWRTHDLHKPYNFLRPELLLAQESGSQRIVALLTIMPGEDYIRHYASILEVAQHDGAISSHHGPIRCVLYPHLTQSMMAWTGLTELSLSVEPGDILILGFVAELLPRFASLVPTARVIGRQDAQYYGLVRLELRPGLVFSLIGAKYSYWGNLGGRVVRELAARRPRAICYIAKQGTLLSPGDIHRTIYSPTRYCVFDKGQACWHGDDHSALPINPLSSRFPTFDRGLHVSTPTIVEQDVDFRTQVEAHGASSVDNELAQMARALTDVHEENPSMERVQLLPLMFITDYLRRPEELGMTVPFDLTSRNETVHRNKELFLARSAHLVLEAFNVIERPKAIIVGTGYGVKTILPALQRRGVEVVGLCGGRDRAKTEAAGNKHGIPCIDVSLAEVQATHGANLLFVASPHDKHAALVQEALDLGGFDIVCEKPLALDMATMRHFANQSQGSSQLRLMNHPLRFYPPLIQLKAASKEPSNILAIDIQYLTRRLSKLTHWSAGFSKAAGGGMMLAMATHFLDLIEWLTSSSLTPASVQDMSTSNSIGPLPTEDAGATKTPDVESAFQMNGCCGLSTKYSVDCDGAADTELFSVTLRLDNEHELRFIQRKGSPVLLEQRLPGREWLPLKVHWEQRVREGSPWQISFQYFAEELVEAICMGTRSAFADKATGFSDYARQVGVFGSKVGIA.

In terms of assembly, interacts with cns2.

It localises to the lipid droplet. Its pathway is secondary metabolite biosynthesis. In terms of biological role, oxidoreductase; part of the gene cluster that mediates the biosynthesis of cordycepin (COR) and pentostatin (PTN), two adenosine analogs with related bioactivity profiles as both mimic adenosine and can inhibit some of the processes that are adenosine dependent. Within the pathway, cns1 catalyzes the last step by converting the cns2 product 2'-carbonyl-3'-deoxyadenosine (2'-C-3'-dA) into cordycepin (3'-deoxyadenosine). The first step of cordycepin biosynthesis involves hydroxyl phosphorylation of the 3'-OH position on adenosine to produce adenosine-3'-monophosphate (3'-AMP), catalyzed by kinase activity of cns3. Next, 3'-AMP is dephosphorylated to 2'-carbonyl-3'-deoxyadenosine by cns2, which is finally converted to cordycepin by the oxidoreductase cns1. Pentostatin production is mediated by the ATP phosphoribosyltransferase activity of cns3 on adenosine to inhibit the activity of adenosine deaminase (ADA) to prevent COR deamination to 3'-deoxyinosine (3'-dI). The protein is Oxidoreductase cns1 of Cordyceps militaris (strain CM01) (Caterpillar fungus).